Here is a 98-residue protein sequence, read N- to C-terminus: NADH-ubiquinone oxidoreductase chain 4L (98 aa).

3 consecutive transmembrane segments (helical) span residues 1–21 (MSMVYINIFLAFILSLMGMLV), 29–49 (SLLCLEGMMLSLFVMMSVTIL), and 61–81 (IVLLVFAACEAALGLSLLVMV).

Belongs to the complex I subunit 4L family. Core subunit of respiratory chain NADH dehydrogenase (Complex I) which is composed of 45 different subunits.

The protein localises to the mitochondrion inner membrane. The catalysed reaction is a ubiquinone + NADH + 5 H(+)(in) = a ubiquinol + NAD(+) + 4 H(+)(out). In terms of biological role, core subunit of the mitochondrial membrane respiratory chain NADH dehydrogenase (Complex I) which catalyzes electron transfer from NADH through the respiratory chain, using ubiquinone as an electron acceptor. Part of the enzyme membrane arm which is embedded in the lipid bilayer and involved in proton translocation. This Canis latrans (Coyote) protein is NADH-ubiquinone oxidoreductase chain 4L (MT-ND4L).